A 259-amino-acid chain; its full sequence is Haloacid dehalogenase-like hydrolase domain-containing protein 2 (259 aa).

The Mg(2+) site is built by Asp13 and Ser15. Residues 13-15 (DLS) and 46-47 (TN) contribute to the substrate site. Residues 47–71 (NTTKESKQDLLERLRKLEFDISEDE) adopt a coiled-coil conformation. Lys50 carries the N6-succinyllysine modification. Lys179 contacts substrate. Asp204 lines the Mg(2+) pocket.

It belongs to the HAD-like hydrolase superfamily. Mg(2+) serves as cofactor.

The sequence is that of Haloacid dehalogenase-like hydrolase domain-containing protein 2 (HDHD2) from Homo sapiens (Human).